Reading from the N-terminus, the 454-residue chain is Serine--tRNA ligase (454 aa).

An L-serine-binding site is contributed by 247 to 249 (TAE). Residues 278-280 (RKE) and Val-294 contribute to the ATP site. Glu-301 contacts L-serine. 365-368 (ELAS) is a binding site for ATP. L-serine is bound at residue Thr-400.

The protein belongs to the class-II aminoacyl-tRNA synthetase family. Type-1 seryl-tRNA synthetase subfamily. Homodimer. The tRNA molecule binds across the dimer.

It localises to the cytoplasm. It catalyses the reaction tRNA(Ser) + L-serine + ATP = L-seryl-tRNA(Ser) + AMP + diphosphate + H(+). The enzyme catalyses tRNA(Sec) + L-serine + ATP = L-seryl-tRNA(Sec) + AMP + diphosphate + H(+). It participates in aminoacyl-tRNA biosynthesis; selenocysteinyl-tRNA(Sec) biosynthesis; L-seryl-tRNA(Sec) from L-serine and tRNA(Sec): step 1/1. Functionally, catalyzes the attachment of serine to tRNA(Ser). Is also able to aminoacylate tRNA(Sec) with serine, to form the misacylated tRNA L-seryl-tRNA(Sec), which will be further converted into selenocysteinyl-tRNA(Sec). This chain is Serine--tRNA ligase, found in Pyrobaculum calidifontis (strain DSM 21063 / JCM 11548 / VA1).